A 327-amino-acid polypeptide reads, in one-letter code: Phosphoenolpyruvate transferase (327 aa).

Residue aspartate 59 coordinates 7,8-didemethyl-8-hydroxy-5-deazariboflavin.

It belongs to the CofD family. In terms of assembly, homodimer. The cofactor is Mg(2+).

It carries out the reaction enolpyruvoyl-2-diphospho-5'-guanosine + 7,8-didemethyl-8-hydroxy-5-deazariboflavin = dehydro coenzyme F420-0 + GMP + H(+). It participates in cofactor biosynthesis; coenzyme F420 biosynthesis. Functionally, catalyzes the transfer of the phosphoenolpyruvate moiety from enoylpyruvoyl-2-diphospho-5'-guanosine (EPPG) to 7,8-didemethyl-8-hydroxy-5-deazariboflavin (FO) with the formation of dehydro coenzyme F420-0 and GMP. The polypeptide is Phosphoenolpyruvate transferase (Mycolicibacterium smegmatis (strain ATCC 700084 / mc(2)155) (Mycobacterium smegmatis)).